The following is a 150-amino-acid chain: Large ribosomal subunit protein bL9 (150 aa).

This sequence belongs to the bacterial ribosomal protein bL9 family.

In terms of biological role, binds to the 23S rRNA. This chain is Large ribosomal subunit protein bL9, found in Streptococcus pneumoniae (strain CGSP14).